Reading from the N-terminus, the 415-residue chain is Histidine--tRNA ligase (415 aa).

It belongs to the class-II aminoacyl-tRNA synthetase family. Homodimer.

Its subcellular location is the cytoplasm. It carries out the reaction tRNA(His) + L-histidine + ATP = L-histidyl-tRNA(His) + AMP + diphosphate + H(+). The polypeptide is Histidine--tRNA ligase (Rickettsia canadensis (strain McKiel)).